Consider the following 531-residue polypeptide: Protein MGF 505-1R (531 aa).

Belongs to the asfivirus MGF 505 family.

Functionally, plays a role in virus cell tropism, and may be required for efficient virus replication in macrophages. This Ornithodoros (relapsing fever ticks) protein is Protein MGF 505-1R.